Here is a 445-residue protein sequence, read N- to C-terminus: Phosphoglucosamine mutase (445 aa).

Catalysis depends on S99, which acts as the Phosphoserine intermediate. S99, D242, D244, and D246 together coordinate Mg(2+). S99 carries the post-translational modification Phosphoserine.

Belongs to the phosphohexose mutase family. Requires Mg(2+) as cofactor. Post-translationally, activated by phosphorylation.

The catalysed reaction is alpha-D-glucosamine 1-phosphate = D-glucosamine 6-phosphate. Catalyzes the conversion of glucosamine-6-phosphate to glucosamine-1-phosphate. The sequence is that of Phosphoglucosamine mutase from Helicobacter pylori (strain P12).